The sequence spans 398 residues: Phosphoglycerate kinase (398 aa).

Substrate contacts are provided by residues 21-23 (DFN), arginine 36, 59-62 (HLGR), arginine 119, and arginine 157. Residues lysine 208, glycine 296, glutamate 327, and 354–357 (GGDS) contribute to the ATP site.

It belongs to the phosphoglycerate kinase family. In terms of assembly, monomer.

Its subcellular location is the cytoplasm. It carries out the reaction (2R)-3-phosphoglycerate + ATP = (2R)-3-phospho-glyceroyl phosphate + ADP. Its pathway is carbohydrate degradation; glycolysis; pyruvate from D-glyceraldehyde 3-phosphate: step 2/5. This Streptococcus equi subsp. equi (strain 4047) protein is Phosphoglycerate kinase.